The following is a 293-amino-acid chain: Non-structural protein NS-S (293 aa).

An essential for inhibition of IFN-beta activation and interaction with host TBK1 region spans residues 21–29 (VRLEPSLGE). An involved in inclusion bodies formation region spans residues 66–69 (PKNP). The segment at 148-220 (FEGDMILDSL…KPLLDCWDFF (73 aa)) is interaction with host TNIP2.

Belongs to the Bandavirus NS-S protein family. As to quaternary structure, interacts with the host E3 ubiquitin ligase TRIM25; this interaction sequesters TRIM25 in NSs-induced cytoplasmic inclusion bodies. Interacts with the host E3 ubiquitin ligase RIGI; this interaction sequesters RIGI in NSs-induced cytoplasmic inclusion bodies. Interacts with the host E3 ubiquitin ligase TBK1 (via N-terminus); this interaction sequesters TBK1 in NSs-induced cytoplasmic inclusion bodies and inhibits TBK1 phosphorylation. NSs does not interact with IKBKE/IKKE or IRF3. Interacts with host IRF7; this interaction sequesters IRF7 in NSs-induced cytoplasmic inclusion bodies. Interacts with host SYNGR2; this interaction is essential to promoting the formation of the inclusion bodies to become virus factories for viral RNA replication through its interaction with NSs. Interacts with host STAT2; this interaction sequesters STAT2 in NSs-induced cytoplasmic inclusion bodies. Interacts with host TNIP2; this interaction promotes TPL2 complex formation and signaling activity leading to IL-10 production. Interacts with host TRIM21 (via B30.2/SPRY domain); this interaction activates host NFE2L2-mediated transcriptional activation of antioxidant genes. Interacts with host CDK1; this interaction is inclusion body dependent, it inhibits the formation and nuclear import of the cyclin B1-CDK1 complex and leads to host cell cycle arrest.

It localises to the host cytoplasm. The protein resides in the host cytoplasmic vesicle. Functionally, sequesters host STAT2 into viral inclusion bodies. Impairs IFN-stimulated phosphorylation and nuclear translocation of host STAT2, thereby suppressing type-I IFN antiviral signaling. Sequesters host TRIM25, RIGI, TBK1/IKK complex components (TBK1, IKBKE/IKKE, and IRF3) and IRF7 into viral inclusion bodies, thereby inhibiting the IFN responses. Inhibits TRIM25-mediated ubiquitination of the RIGI. The sequestration of IKBKE/IKKE, and IRF3 occurs via the interaction with TBK1. Sequestration and inhibition of host TBK1 probably participates to the cytokine storm induced by the virus. Also inhibits the phosphorylation of host TBK1. Interacts with host TNIP2 and promotes TPL2-TNIP2-p105 complex formation leading to IL-10 induction. By interacting with CDK1, induces host cell arrest at the G2/M transition to promote viral replication. Requested for the formation of the viral cytoplasmic inclusion bodies. The polypeptide is Non-structural protein NS-S (NSS) (SFTS phlebovirus (isolate SFTSV/Human/China/HB29/2010) (Severe fever with thrombocytopenia virus)).